The primary structure comprises 232 residues: MTETFKVAITFVSPSSEALAQSIIDSINKSADTTRAIKIQADMRDTDSPLRIIDATICAFGPNIDILVNNAGVESLVSLSELGLQDFNECIDVNFRAVVFMTKSVIPYLRSPGRIINISSSSAHAGGLSSGIYAASKAAVEALARFWATSLGPQGHSVNTVVPGLTQTDMYERIIAEESSAAYHRTVASMTPMGGRVGTPEDIARIVSLLVEPRSQWVTGQTISATGGLILL.

The signal sequence occupies residues 1–20 (MTETFKVAITFVSPSSEALA). Position 19 (L19) interacts with NADP(+). N-linked (GlcNAc...) asparagine glycosylation occurs at N28. Residues D42, N70, and K103 each coordinate NADP(+). N117 carries an N-linked (GlcNAc...) asparagine glycan. Catalysis depends on proton donor residues S119 and S121. NADP(+) is bound by residues Y133, K137, and T168. Y133 functions as the Proton acceptor in the catalytic mechanism. The active-site Lowers pKa of active site Tyr is the K137.

The protein belongs to the short-chain dehydrogenases/reductases (SDR) family.

The enzyme catalyses a primary alcohol + NAD(+) = an aldehyde + NADH + H(+). The catalysed reaction is a secondary alcohol + NAD(+) = a ketone + NADH + H(+). It participates in mycotoxin biosynthesis. Its function is as follows. Dehydrogenase; part of the Tox1A locus, one of the 2 loci that mediate the biosynthesis of T-toxin, a family of linear polyketides 37 to 45 carbons in length, of which the major component is 41 carbons, and which leads to high virulence to maize. One of the PKSs (PKS1 or PKS2) could synthesize a precursor, used subsequently by the other PKS as starter unit, to add additional carbons. Variability in the length of the final carbon backbone C35-47 could be achieved by varying the number of condensation cycles, or use of different starter or extender units or might be due to decarboxylation of the penultimate product, catalyzed by DEC1. Additional proteins are required for the biosynthesis of T-toxin, including oxidoreductases RED1, RED2, RED3, LAM1 and OXI1, as well as esterase TOX9. The polypeptide is Dehydrogenase OXI1 (Cochliobolus heterostrophus (strain C4 / ATCC 48331 / race T) (Southern corn leaf blight fungus)).